Here is a 327-residue protein sequence, read N- to C-terminus: Delta(3,5)-Delta(2,4)-dienoyl-CoA isomerase, mitochondrial (327 aa).

The N-terminal 33 residues, 1–33, are a transit peptide targeting the mitochondrion; it reads MATAMTVSSKLLGLLMQQLRGTRQLYFNVSLRS. Substrate contacts are provided by residues 115–119 and Gly-173; that span reads SGIDL. Lys-230 bears the N6-succinyllysine mark. Phosphoserine is present on Ser-267. Lys-316 is modified (N6-succinyllysine). The short motif at 325 to 327 is the Microbody targeting signal element; that stretch reads SKL. Lys-326 bears the N6-acetyllysine mark.

This sequence belongs to the enoyl-CoA hydratase/isomerase family. As to quaternary structure, homohexamer. Expressed in heart and liver (at protein level).

The protein localises to the mitochondrion. Its subcellular location is the peroxisome. It catalyses the reaction (3E,5Z)-octadienoyl-CoA = (2E,4E)-octadienoyl-CoA. The enzyme catalyses (3E,5Z,8Z,11Z,14Z)-eicosapentaenoyl-CoA = (2E,4E,8Z,11Z,14Z)-eicosapentaenoyl-CoA. Its pathway is lipid metabolism; fatty acid beta-oxidation. Functionally, isomerization of 3-trans,5-cis-dienoyl-CoA to 2-trans,4-trans-dienoyl-CoA. The chain is Delta(3,5)-Delta(2,4)-dienoyl-CoA isomerase, mitochondrial from Rattus norvegicus (Rat).